The primary structure comprises 433 residues: Zinc finger and SCAN domain-containing protein 4 (433 aa).

The 83-residue stretch at 44–126 (RMVLNSFQDS…RFMEDLTDDS (83 aa)) folds into the SCAN box domain. 2 stretches are compositionally biased toward polar residues: residues 162 to 184 (SAQT…TSLE) and 277 to 298 (QPEQ…NSTC). 2 disordered regions span residues 162–199 (SAQT…CNSS) and 272–298 (AGCI…NSTC). C2H2-type zinc fingers lie at residues 312-334 (YKCE…QRRH), 340-362 (FVCP…QIIH), 368-390 (FTCS…ERIH), and 396-418 (YTCP…MRTH). The disordered stretch occupies residues 414–433 (HMRTHEKITPPSVPSTPEAS).

It localises to the nucleus. The protein resides in the chromosome. The protein localises to the telomere. Its function is as follows. Embryonic stem (ES) cell-specific transcription factor required to regulate ES cell pluripotency. Binds telomeres and plays a key role in genomic stability in ES cells by regulating telomere elongation. Acts as an activator of spontaneous telomere sister chromatid exchange (T-SCE) and telomere elongation in undifferentiated ES cells. This is Zinc finger and SCAN domain-containing protein 4 (ZSCAN4) from Pongo pygmaeus (Bornean orangutan).